The sequence spans 489 residues: Membrane-bound lytic murein transglycosylase F (489 aa).

The N-terminal stretch at 1-32 (MFALTAYRLRCAAWLLATGIFLLLAGCSEAKA) is a signal peptide. A non-LT domain region spans residues 33–268 (PTALERVQKE…RLKDRYYGHV (236 aa)). Positions 269–489 (DVLGYVGAYT…PEEDSGDEKL (221 aa)) are LT domain. Residue glutamate 315 is part of the active site. Positions 466-489 (AESGLHLPGVNKTRPEEDSGDEKL) are disordered. Residues 478 to 489 (TRPEEDSGDEKL) show a composition bias toward basic and acidic residues.

The protein in the N-terminal section; belongs to the bacterial solute-binding protein 3 family. In the C-terminal section; belongs to the transglycosylase Slt family.

The protein resides in the cell outer membrane. It carries out the reaction Exolytic cleavage of the (1-&gt;4)-beta-glycosidic linkage between N-acetylmuramic acid (MurNAc) and N-acetylglucosamine (GlcNAc) residues in peptidoglycan, from either the reducing or the non-reducing ends of the peptidoglycan chains, with concomitant formation of a 1,6-anhydrobond in the MurNAc residue.. Its function is as follows. Murein-degrading enzyme that degrades murein glycan strands and insoluble, high-molecular weight murein sacculi, with the concomitant formation of a 1,6-anhydromuramoyl product. Lytic transglycosylases (LTs) play an integral role in the metabolism of the peptidoglycan (PG) sacculus. Their lytic action creates space within the PG sacculus to allow for its expansion as well as for the insertion of various structures such as secretion systems and flagella. The protein is Membrane-bound lytic murein transglycosylase F of Pseudomonas aeruginosa (strain UCBPP-PA14).